Here is a 326-residue protein sequence, read N- to C-terminus: L-lactate dehydrogenase (326 aa).

39–60 contacts NAD(+); the sequence is DVVTGMPEGKALDDSQATSIAD. Substrate-binding residues include arginine 99, asparagine 131, and arginine 162. Asparagine 131 provides a ligand contact to NAD(+). The active-site Proton acceptor is histidine 186.

It belongs to the LDH/MDH superfamily. LDH family. In terms of assembly, homotetramer.

The enzyme catalyses (S)-lactate + NAD(+) = pyruvate + NADH + H(+). It functions in the pathway fermentation; pyruvate fermentation to lactate; (S)-lactate from pyruvate: step 1/1. This chain is L-lactate dehydrogenase, found in Toxoplasma gondii.